A 30-amino-acid polypeptide reads, in one-letter code: Brevinin-2Rj (30 aa).

C24 and C30 are joined by a disulfide.

As to expression, expressed by the skin glands.

Its subcellular location is the secreted. Functionally, antimicrobial peptide. This Pelophylax ridibundus (Marsh frog) protein is Brevinin-2Rj.